A 398-amino-acid chain; its full sequence is 2-amino-3-ketobutyrate coenzyme A ligase (398 aa).

Residue 111–112 (CF) participates in pyridoxal 5'-phosphate binding. Histidine 136 provides a ligand contact to substrate. Pyridoxal 5'-phosphate is bound by residues serine 185, 210-213 (DDSH), 241-244 (TLGK), and 274-275 (SN). N6-(pyridoxal phosphate)lysine is present on lysine 244. Position 368 (arginine 368) interacts with substrate.

The protein belongs to the class-II pyridoxal-phosphate-dependent aminotransferase family. As to quaternary structure, homodimer. Pyridoxal 5'-phosphate serves as cofactor.

It catalyses the reaction glycine + acetyl-CoA = (2S)-2-amino-3-oxobutanoate + CoA. The protein operates within amino-acid degradation; L-threonine degradation via oxydo-reductase pathway; glycine from L-threonine: step 2/2. In terms of biological role, catalyzes the cleavage of 2-amino-3-ketobutyrate to glycine and acetyl-CoA. This is 2-amino-3-ketobutyrate coenzyme A ligase from Salmonella typhimurium (strain LT2 / SGSC1412 / ATCC 700720).